Consider the following 441-residue polypeptide: Proline--tRNA ligase (441 aa).

It belongs to the class-II aminoacyl-tRNA synthetase family. ProS type 2 subfamily. As to quaternary structure, homodimer.

It is found in the cytoplasm. It catalyses the reaction tRNA(Pro) + L-proline + ATP = L-prolyl-tRNA(Pro) + AMP + diphosphate. Functionally, catalyzes the attachment of proline to tRNA(Pro) in a two-step reaction: proline is first activated by ATP to form Pro-AMP and then transferred to the acceptor end of tRNA(Pro). The protein is Proline--tRNA ligase of Methylobacterium radiotolerans (strain ATCC 27329 / DSM 1819 / JCM 2831 / NBRC 15690 / NCIMB 10815 / 0-1).